A 751-amino-acid polypeptide reads, in one-letter code: Diamine oxidase [copper-containing] (751 aa).

A signal peptide spans 1–19 (MPALGWAVAAILMLQTAMA). 2 N-linked (GlcNAc...) asparagine glycosylation sites follow: N110 and N168. C177 and C181 form a disulfide bridge. D373 (proton acceptor) is an active-site residue. An intrachain disulfide couples C391 to C417. The active-site Schiff-base intermediate with substrate; via topaquinone is Y461. A 2',4',5'-topaquinone modification is found at Y461. The Cu(2+) site is built by H510 and H512. 3 residues coordinate Ca(2+): D519, L520, and D521. N538 carries N-linked (GlcNAc...) asparagine glycosylation. Residues E562, F653, N656, E658, D664, and L665 each coordinate Ca(2+). Residue H675 participates in Cu(2+) binding. A glycan (N-linked (GlcNAc...) asparagine) is linked at N745.

Belongs to the copper/topaquinone oxidase family. As to quaternary structure, homodimer; disulfide-linked. Requires Cu(2+) as cofactor. Ca(2+) is required as a cofactor. It depends on L-topaquinone as a cofactor. N-glycosylated. Post-translationally, topaquinone (TPQ) is generated by copper-dependent autoxidation of a specific tyrosyl residue. Widely expressed with higher expression in placenta and kidney.

It is found in the secreted. The protein localises to the extracellular space. The protein resides in the cell membrane. The catalysed reaction is histamine + O2 + H2O = imidazole-4-acetaldehyde + H2O2 + NH4(+). It carries out the reaction N(tau)-methylhistamine + O2 + H2O = 1-methylimidazole-4-acetaldehyde + H2O2 + NH4(+). It catalyses the reaction putrescine + O2 + H2O = 4-aminobutanal + H2O2 + NH4(+). The enzyme catalyses cadaverine + O2 + H2O = 5-aminopentanal + H2O2 + NH4(+). With respect to regulation, inhibited by amiloride and amiloride analogs. Inhibited by isoniazid, cimetidine, clonidine, berenil and pentamidine. Functionally, catalyzes the oxidative deamination of primary amines to the corresponding aldehydes with the concomitant production of hydrogen peroxide and ammonia. Its preferred substrates are the diamines histamine and 1-methylhistamine and it could therefore play a role in allergic and immune responses. Has a broad specificity for diamines and can also act on cadaverine and putrescine, two products of amino acid catabolism. It could also act on polyamines, like spermidine and spermine though less efficiently, and regulate various biological processes. This Homo sapiens (Human) protein is Diamine oxidase [copper-containing].